We begin with the raw amino-acid sequence, 818 residues long: RNA-directed RNA polymerase (818 aa).

The RdRp catalytic domain maps to 524–641 (PVAIGLDASR…IIERRNLKRV (118 aa)).

This sequence belongs to the tombusviridae RNA polymerase family.

The enzyme catalyses RNA(n) + a ribonucleoside 5'-triphosphate = RNA(n+1) + diphosphate. RNA-dependent RNA polymerase that plays an essential role in the virus replication. This is RNA-directed RNA polymerase from Cymbidium (Creeping white clover).